Consider the following 255-residue polypeptide: Transcription factor CAULIFLOWER (255 aa).

The region spanning M1 to S61 is the MADS-box domain. Residues Q90 to I180 enclose the K-box domain. Positions Q90 to V198 form a coiled coil.

In terms of assembly, homodimer capable of binding to CArG-box sequences. Expressed in young flower primordia.

It is found in the nucleus. Functionally, probable transcription factor that promotes early floral meristem identity in synergy with APETALA1, FRUITFULL and LEAFY. Is required subsequently for the transition of an inflorescence meristem into a floral meristem. Seems to be partially redundant to the function of APETALA1. Positively regulates the APETALA1 and LEAFY expression. The sequence is that of Transcription factor CAULIFLOWER (CAL) from Arabidopsis thaliana (Mouse-ear cress).